The primary structure comprises 876 residues: Leucine--tRNA ligase (876 aa).

The disordered stretch occupies residues 1–20 (MATERYNPRDAEPRWQQKWN). A 'HIGH' region motif is present at residues 43-53 (PYPSGRIHMGH). The short motif at 632–636 (KMSKS) is the 'KMSKS' region element. Residue K635 coordinates ATP.

Belongs to the class-I aminoacyl-tRNA synthetase family.

It is found in the cytoplasm. It catalyses the reaction tRNA(Leu) + L-leucine + ATP = L-leucyl-tRNA(Leu) + AMP + diphosphate. The sequence is that of Leucine--tRNA ligase from Rhizobium leguminosarum bv. trifolii (strain WSM2304).